The primary structure comprises 201 residues: FMN reductase (NADH) RutF (201 aa).

The interval 169-201 is disordered; sequence APRSGAAPAEPARAARALGARPAEGPALALRSA.

Belongs to the non-flavoprotein flavin reductase family. RutF subfamily.

It carries out the reaction FMNH2 + NAD(+) = FMN + NADH + 2 H(+). Catalyzes the reduction of FMN to FMNH2 which is used to reduce pyrimidine by RutA via the Rut pathway. The polypeptide is FMN reductase (NADH) RutF (Methylorubrum extorquens (strain ATCC 14718 / DSM 1338 / JCM 2805 / NCIMB 9133 / AM1) (Methylobacterium extorquens)).